Consider the following 249-residue polypeptide: Exosome complex component Rrp41 (249 aa).

It belongs to the RNase PH family. Rrp41 subfamily. In terms of assembly, component of the archaeal exosome complex. Forms a hexameric ring-like arrangement composed of 3 Rrp41-Rrp42 heterodimers. The hexameric ring associates with a trimer of Rrp4 and/or Csl4 subunits.

Its subcellular location is the cytoplasm. In terms of biological role, catalytic component of the exosome, which is a complex involved in RNA degradation. Has 3'-&gt;5' exoribonuclease activity. Can also synthesize heteromeric RNA-tails. This Pyrococcus horikoshii (strain ATCC 700860 / DSM 12428 / JCM 9974 / NBRC 100139 / OT-3) protein is Exosome complex component Rrp41.